Reading from the N-terminus, the 305-residue chain is Tetraspanin-12 (305 aa).

Topologically, residues methionine 1 to cysteine 12 are cytoplasmic. S-palmitoyl cysteine attachment occurs at residues cysteine 9 and cysteine 12. Residues leucine 13–alanine 33 form a helical membrane-spanning segment. Topologically, residues tryptophan 34–tyrosine 59 are extracellular. A helical membrane pass occupies residues phenylalanine 60–leucine 80. Residues glycine 81–asparagine 89 are Cytoplasmic-facing. Cysteine 83 is lipidated: S-palmitoyl cysteine. Residues leucine 90–cysteine 110 traverse the membrane as a helical segment. The Extracellular segment spans residues glycine 111–arginine 224. Residues phenylalanine 225 to leucine 245 form a helical membrane-spanning segment. Topologically, residues tryptophan 246–leucine 305 are cytoplasmic.

It belongs to the tetraspanin (TM4SF) family. Component of a complex, at least composed of TSPAN12, FZD4 and norrin (NDP). Interacts (when palmitoylated) with ADAM10. Interacts with MMP14/MT1-MMP. Post-translationally, palmitoylated; required for interaction with ADAM10. The precise position of palmitoylated residues is unclear and occurs either on Cys-9, Cys-12 and/or Cys-83.

Its subcellular location is the cell membrane. Functionally, regulator of cell surface receptor signal transduction. Plays a central role in retinal vascularization by regulating norrin (NDP) signal transduction. Acts in concert with norrin (NDP) to promote FZD4 multimerization and subsequent activation of FZD4, leading to promote accumulation of beta-catenin (CTNNB1) and stimulate LEF/TCF-mediated transcriptional programs. Suprisingly, it only activates the norrin (NDP)-dependent activation of FZD4, while it does not activate the Wnt-dependent activation of FZD4, suggesting the existence of a Wnt-independent signaling that also promote accumulation the beta-catenin (CTNNB1). Acts as a regulator of membrane proteinases such as ADAM10 and MMP14/MT1-MMP. Activates ADAM10-dependent cleavage activity of amyloid precursor protein (APP). Activates MMP14/MT1-MMP-dependent cleavage activity. The protein is Tetraspanin-12 (TSPAN12) of Homo sapiens (Human).